The chain runs to 342 residues: Galactose mutarotase (342 aa).

Ser14 carries the phosphoserine modification. Residues 81-82 (NR) and His107 each bind beta-D-galactose. Ser124 bears the Phosphoserine mark. The active-site Proton donor is His176. Residues 176-178 (HSY), Asp243, Gln279, and Glu307 each bind beta-D-galactose. The active-site Proton acceptor is Glu307.

It belongs to the aldose epimerase family. As to quaternary structure, monomer.

Its subcellular location is the cytoplasm. The catalysed reaction is alpha-D-galactose = beta-D-galactose. The enzyme catalyses alpha-D-glucose = beta-D-glucose. The protein operates within carbohydrate metabolism; hexose metabolism. Its pathway is carbohydrate metabolism; galactose metabolism. Its function is as follows. Mutarotase that catalyzes the interconversion of beta-D-galactose and alpha-D-galactose during galactose metabolism. Beta-D-galactose is metabolized in the liver into glucose 1-phosphate, the primary metabolic fuel, by the action of four enzymes that constitute the Leloir pathway: GALM, GALK1 (galactokinase), GALT (galactose-1-phosphate uridylyltransferase) and GALE (UDP-galactose-4'-epimerase). Involved in the maintenance of the equilibrium between the beta- and alpha-anomers of galactose, therefore ensuring a sufficient supply of the alpha-anomer for GALK1. Also active on D-glucose although shows a preference for galactose over glucose. The sequence is that of Galactose mutarotase (Galm) from Rattus norvegicus (Rat).